Reading from the N-terminus, the 434-residue chain is Glutamate-1-semialdehyde 2,1-aminomutase (434 aa).

Lys-266 bears the N6-(pyridoxal phosphate)lysine mark.

This sequence belongs to the class-III pyridoxal-phosphate-dependent aminotransferase family. HemL subfamily. Homodimer. It depends on pyridoxal 5'-phosphate as a cofactor.

The protein resides in the cytoplasm. The enzyme catalyses (S)-4-amino-5-oxopentanoate = 5-aminolevulinate. It participates in porphyrin-containing compound metabolism; protoporphyrin-IX biosynthesis; 5-aminolevulinate from L-glutamyl-tRNA(Glu): step 2/2. In Fusobacterium nucleatum subsp. nucleatum (strain ATCC 25586 / DSM 15643 / BCRC 10681 / CIP 101130 / JCM 8532 / KCTC 2640 / LMG 13131 / VPI 4355), this protein is Glutamate-1-semialdehyde 2,1-aminomutase.